The sequence spans 270 residues: Putative pyruvate, phosphate dikinase regulatory protein (270 aa).

An ADP-binding site is contributed by 151–158; that stretch reads GVSRTSKT.

The protein belongs to the pyruvate, phosphate/water dikinase regulatory protein family. PDRP subfamily.

The enzyme catalyses N(tele)-phospho-L-histidyl/L-threonyl-[pyruvate, phosphate dikinase] + ADP = N(tele)-phospho-L-histidyl/O-phospho-L-threonyl-[pyruvate, phosphate dikinase] + AMP + H(+). It carries out the reaction N(tele)-phospho-L-histidyl/O-phospho-L-threonyl-[pyruvate, phosphate dikinase] + phosphate + H(+) = N(tele)-phospho-L-histidyl/L-threonyl-[pyruvate, phosphate dikinase] + diphosphate. Bifunctional serine/threonine kinase and phosphorylase involved in the regulation of the pyruvate, phosphate dikinase (PPDK) by catalyzing its phosphorylation/dephosphorylation. The sequence is that of Putative pyruvate, phosphate dikinase regulatory protein from Ligilactobacillus salivarius (strain UCC118) (Lactobacillus salivarius).